A 170-amino-acid chain; its full sequence is Nucleoside-triphosphatase THEP1 (170 aa).

ATP is bound by residues 7–14 (GMPGVGKT) and 98–105 (IIIIDELG).

Belongs to the THEP1 NTPase family.

It carries out the reaction a ribonucleoside 5'-triphosphate + H2O = a ribonucleoside 5'-diphosphate + phosphate + H(+). Its function is as follows. Has nucleotide phosphatase activity towards ATP, GTP, CTP, TTP and UTP. May hydrolyze nucleoside diphosphates with lower efficiency. The sequence is that of Nucleoside-triphosphatase THEP1 from Methanocaldococcus jannaschii (strain ATCC 43067 / DSM 2661 / JAL-1 / JCM 10045 / NBRC 100440) (Methanococcus jannaschii).